Here is a 347-residue protein sequence, read N- to C-terminus: VIP36-like protein (347 aa).

The signal sequence occupies residues 1–43 (MAAASRPSWWQRWRRRAWARDGAKLLLFLLLLGSGPGPRHVRA). At 44-312 (GQAVEYLKRE…VPPTPLSGLA (269 aa)) the chain is on the lumenal side. Residues 48-273 (EYLKREHSLS…DVISLKLFEL (226 aa)) form the L-type lectin-like domain. Residues Ser-92 and Asp-127 each coordinate a carbohydrate. Ca(2+) is bound by residues Asp-158, Tyr-160, and Asn-162. An a carbohydrate-binding site is contributed by 160 to 162 (YPN). A glycan (N-linked (GlcNAc...) asparagine) is linked at Asn-180. His-187 provides a ligand contact to a carbohydrate. Asp-190 lines the Ca(2+) pocket. Cys-199 and Cys-236 are oxidised to a cystine. Position 257–259 (257–259 (GDL)) interacts with a carbohydrate. Residues 313 to 335 (LFLIVFFSLVFSVFAIVIGIILY) form a helical membrane-spanning segment. Over 336-347 (NKWQDQSRKRFY) the chain is Cytoplasmic. An Endoplasmic reticulum retention signal motif is present at residues 343–345 (RKR).

It localises to the endoplasmic reticulum membrane. Its subcellular location is the golgi apparatus membrane. In terms of biological role, may be involved in the regulation of export from the endoplasmic reticulum of a subset of glycoproteins. May function as a regulator of ERGIC-53. The sequence is that of VIP36-like protein (Lman2l) from Mus musculus (Mouse).